The chain runs to 533 residues: 1-aminocyclopropane-1-carboxylate synthase 5 (533 aa).

K358 carries the N6-(pyridoxal phosphate)lysine modification.

Belongs to the class-I pyridoxal-phosphate-dependent aminotransferase family. It depends on pyridoxal 5'-phosphate as a cofactor. Expressed in shoots and leaf blades. Expressed at low levels in leaf sheaths. Expressed in vasculature of roots and shoots.

It catalyses the reaction S-adenosyl-L-methionine = 1-aminocyclopropane-1-carboxylate + S-methyl-5'-thioadenosine + H(+). The protein operates within alkene biosynthesis; ethylene biosynthesis via S-adenosyl-L-methionine; ethylene from S-adenosyl-L-methionine: step 1/2. Catalyzes the formation of 1-aminocyclopropane-1-carboxylate, a direct precursor of ethylene in higher plants. This Oryza sativa subsp. japonica (Rice) protein is 1-aminocyclopropane-1-carboxylate synthase 5.